Here is a 427-residue protein sequence, read N- to C-terminus: Endothelin-1 receptor (427 aa).

Positions 1–20 (METFWLRVSFWVALVGGVIS) are cleaved as a signal peptide. Over 21–80 (DNPESYSTNLSIHVDSVTTFRGTELSFVVTTHQPTNLALPSNGSMHNYCPQQTKITSAFK) the chain is Extracellular. N-linked (GlcNAc...) asparagine glycosylation is found at Asn-29 and Asn-62. Residues 81-102 (YINTVISCTIFIVGMVGNATLL) traverse the membrane as a helical segment. Over 103–112 (RIIYQNKCMR) the chain is Cytoplasmic. Residues 113–132 (NGPNALIASLALGDLIYVVI) traverse the membrane as a helical segment. Over 133-159 (DLPINVFKLLAGRWPFEQNDFGVFLCK) the chain is Extracellular. Cys-158 and Cys-239 are joined by a disulfide. Residues 160–181 (LFPFLQKSSVGITVLNLCALSV) form a helical membrane-spanning segment. The Cytoplasmic portion of the chain corresponds to 182-205 (DRYRAVASWSRVQGIGIPLVTAIE). A helical membrane pass occupies residues 206–229 (IVSIWILSFILAIPEAIGFVMVPF). The Extracellular portion of the chain corresponds to 230 to 256 (EYKGAQHRTCMLNATSKFMEFYQDVKD). Residues 257–278 (WWLFGFYFCMPLVCTAIFYTLM) traverse the membrane as a helical segment. The Cytoplasmic portion of the chain corresponds to 279–306 (TCEMLNRRNGSLRIALSEHLKQRREVAK). Residues 307–328 (TVFCLVVIFALCWFPLHLSRIL) traverse the membrane as a helical segment. The Extracellular portion of the chain corresponds to 329–347 (KKTVYDEMDTNRCELLSFL). Residues 348–372 (LLMDYIGINLATMNSCINPIALYFV) form a helical membrane-spanning segment. Residues 373–427 (SKKFKNCFQSCLCCCCYQSKSLMTSVPMNGTSIQWKNPEQNNHNTERSSHKDSIN) are Cytoplasmic-facing. Over residues 405–415 (IQWKNPEQNNH) the composition is skewed to polar residues. A disordered region spans residues 405 to 427 (IQWKNPEQNNHNTERSSHKDSIN). The span at 416 to 427 (NTERSSHKDSIN) shows a compositional bias: basic and acidic residues. Position 425 is a phosphoserine (Ser-425).

Belongs to the G-protein coupled receptor 1 family. Endothelin receptor subfamily. EDNRA sub-subfamily. As to quaternary structure, interacts with HDAC7 and KAT5.

The protein resides in the cell membrane. Its function is as follows. Receptor for endothelin-1. Mediates its action by association with G proteins that activate a phosphatidylinositol-calcium second messenger system. The rank order of binding affinities for ET-A is: ET1 &gt; ET2 &gt;&gt; ET3. This is Endothelin-1 receptor from Ovis aries (Sheep).